The following is a 762-amino-acid chain: 5-methyltetrahydropteroyltriglutamate--homocysteine methyltransferase (762 aa).

5-methyltetrahydropteroyltri-L-glutamate is bound by residues 17–20 and Lys-111; that span reads REWK. L-homocysteine is bound by residues 435 to 437 and Glu-488; that span reads IGS. L-methionine is bound by residues 435–437 and Glu-488; that span reads IGS. 5-methyltetrahydropteroyltri-L-glutamate is bound by residues 519–520 and Trp-565; that span reads RC. Residue Asp-603 coordinates L-homocysteine. An L-methionine-binding site is contributed by Asp-603. Glu-609 provides a ligand contact to 5-methyltetrahydropteroyltri-L-glutamate. Residues His-645, Cys-647, and Glu-669 each coordinate Zn(2+). His-698 (proton donor) is an active-site residue. Cys-730 serves as a coordination point for Zn(2+).

This sequence belongs to the vitamin-B12 independent methionine synthase family. Requires Zn(2+) as cofactor.

The catalysed reaction is 5-methyltetrahydropteroyltri-L-glutamate + L-homocysteine = tetrahydropteroyltri-L-glutamate + L-methionine. It functions in the pathway amino-acid biosynthesis; L-methionine biosynthesis via de novo pathway; L-methionine from L-homocysteine (MetE route): step 1/1. Functionally, catalyzes the transfer of a methyl group from 5-methyltetrahydrofolate to homocysteine resulting in methionine formation. This is 5-methyltetrahydropteroyltriglutamate--homocysteine methyltransferase from Bacillus cereus (strain AH187).